The chain runs to 20 residues: Protease inhibitor (20 aa).

As to quaternary structure, monomer. Glycosylated. As to expression, stored in epidermis and secreted into the hemolymph and cuticle. Not detected in the interior of the epidermis, fat body cells or columnar or goblet cells of the midgut epithelium (at protein level).

Its function is as follows. Inhibits trypsin and chymotrypsin. The sequence is that of Protease inhibitor from Antheraea mylitta (Tasar silkworm).